The primary structure comprises 198 residues: Large ribosomal subunit protein uL24c (198 aa).

The transit peptide at 1–50 (MATMSALQSSFTSLSLSPSSSFLGQRLISPISLSVTSPVKPAENPCLVLA) directs the protein to the chloroplast.

It belongs to the universal ribosomal protein uL24 family. As to quaternary structure, part of the 50S ribosomal subunit.

It is found in the plastid. It localises to the chloroplast. Its function is as follows. One of two assembly initiator proteins, it binds directly to the 5'-end of the 23S rRNA, where it nucleates assembly of the 50S subunit. Required for optimal plastid performance in terms of photosynthesis and growth. Required for the translation of plastid mRNAs. Plays a critical role in biosynthesis of thylakoid membrane proteins encoded by chloroplast genes. This is Large ribosomal subunit protein uL24c (RPL24) from Arabidopsis thaliana (Mouse-ear cress).